Reading from the N-terminus, the 450-residue chain is Sensor histidine kinase EnvZ (450 aa).

Over 1–15 the chain is Cytoplasmic; the sequence is MRRMRFSPRSSFART. Residues 16-35 traverse the membrane as a helical segment; it reads LLLIVTLLFVSLVTTYLVVL. Residues 36-158 lie on the Periplasmic side of the membrane; the sequence is NFAILPSLQQ…LTEIHQGDFS (123 aa). Residues 159-179 form a helical membrane-spanning segment; that stretch reads PLFRYTLAIMLLAIGGAWLFI. An HAMP domain is found at 180 to 232; the sequence is RIQNRPLVDLEHAALQVGKGIIPPPLREYGASEVRSVTRAFNHMAAGVKQLAD. Over 180–450 the chain is Cytoplasmic; that stretch reads RIQNRPLVDL…ARVQGTTKEA (271 aa). Positions 223–289 are cytoplasmic dimerization domain (CDD), when dimerized forms osmosensitive core; sequence MAAGVKQLAD…IIEQFIDYLR (67 aa). In terms of domain architecture, Histidine kinase spans 240-440; that stretch reads GVSHDLRTPL…SIRAWLPVPV (201 aa). ATP-binding positions include H243, 347-351, D373, 392-393, and 402-406; these read NAARY, RG, and TGLGL. H243 carries the phosphohistidine; by autocatalysis modification.

In terms of assembly, homodimer. Autophosphorylated.

It localises to the cell inner membrane. The enzyme catalyses ATP + protein L-histidine = ADP + protein N-phospho-L-histidine.. Member of the two-component regulatory system EnvZ/OmpR involved in regulating expression of the outer membrane porins OmpC and OmpF as well as other genes. Unlike E.coli or S.typhimurium both porins are expressed constitutively. Involved in regulation of the biosynthesis of Vi polysaccharide, a capsular antigen thought to be involved in the virulence of S.typhi. Vi antigen is synthesized at low NaCl concentrations (under 0.4 M). EnvZ functions as a membrane-associated protein kinase that phosphorylates OmpR in response to environmental signals. The protein is Sensor histidine kinase EnvZ (envZ) of Salmonella typhi.